A 163-amino-acid chain; its full sequence is Peptide deformylase 3 (163 aa).

The Fe cation site is built by Cys-91 and His-133. Glu-134 is a catalytic residue. His-137 provides a ligand contact to Fe cation.

The protein belongs to the polypeptide deformylase family. Fe(2+) is required as a cofactor.

It carries out the reaction N-terminal N-formyl-L-methionyl-[peptide] + H2O = N-terminal L-methionyl-[peptide] + formate. Removes the formyl group from the N-terminal Met of newly synthesized proteins. Requires at least a dipeptide for an efficient rate of reaction. N-terminal L-methionine is a prerequisite for activity but the enzyme has broad specificity at other positions. The polypeptide is Peptide deformylase 3 (Shewanella oneidensis (strain ATCC 700550 / JCM 31522 / CIP 106686 / LMG 19005 / NCIMB 14063 / MR-1)).